The chain runs to 338 residues: MNFKVCSFPSRRQSIAAFVRVLMVILLTLGALVSSDVLLPQPAAAYPFWAQQNYANPREATGRIVCANCHLAAKPAEIEVPQAVLPDSVFKAVVKIPYDHSVQQVQADGSKGPLNVGAVLMLPEGFTIAPEDRIPEEMKEEVGPSYLFQPYADDKQNIVLVGPLPGDQYEEIVFPVLSPNPATNKSVAFGKYSIHLGANRGRGQIYPTGEKSNNAVYNASAAGVITAIAKADDGSAEVKIRTEDGTTIVDKIPAGPELIVSEGEEVAAGAALTNNPNVGGFGQKDTEIVLQSPNRVKGRIAFLAAITLTQILLVLKKKQVERVQAGRDDLLKAAFIAG.

Positions 1 to 45 (MNFKVCSFPSRRQSIAAFVRVLMVILLTLGALVSSDVLLPQPAAA) are cleaved as a signal peptide. Residues Tyr-46, Cys-66, Cys-69, and His-70 each contribute to the heme site. The helical transmembrane segment at 300 to 316 (IAFLAAITLTQILLVLK) threads the bilayer.

Belongs to the cytochrome f family. As to quaternary structure, the 4 large subunits of the cytochrome b6-f complex are cytochrome b6, subunit IV (17 kDa polypeptide, PetD), cytochrome f and the Rieske protein, while the 4 small subunits are PetG, PetL, PetM and PetN. The complex functions as a dimer. Requires heme as cofactor.

The protein resides in the cellular thylakoid membrane. Functionally, component of the cytochrome b6-f complex, which mediates electron transfer between photosystem II (PSII) and photosystem I (PSI), cyclic electron flow around PSI, and state transitions. The polypeptide is Cytochrome f (petA) (Leptolyngbya laminosa (Phormidium laminosum)).